The chain runs to 90 residues: UPF0237 protein NMA1909 (90 aa).

The 79-residue stretch at valine 5–isoleucine 83 folds into the ACT domain.

Belongs to the UPF0237 family.

The protein is UPF0237 protein NMA1909 of Neisseria meningitidis serogroup A / serotype 4A (strain DSM 15465 / Z2491).